A 448-amino-acid polypeptide reads, in one-letter code: C4-dicarboxylate transport protein (448 aa).

The next 9 helical transmembrane spans lie at Ser13–Pro33, Leu49–Met69, Leu81–Val101, Ala149–Leu169, Ile193–Ile213, Leu227–Ser247, Val294–Leu314, Thr336–Phe356, and Ile357–Ile377.

It belongs to the dicarboxylate/amino acid:cation symporter (DAACS) (TC 2.A.23) family.

Its subcellular location is the cell inner membrane. Responsible for the transport of dicarboxylates such as succinate, fumarate, and malate from the periplasm across the membrane. This Albidiferax ferrireducens (strain ATCC BAA-621 / DSM 15236 / T118) (Rhodoferax ferrireducens) protein is C4-dicarboxylate transport protein.